A 201-amino-acid polypeptide reads, in one-letter code: MARYTGPITRKSRRLRVDLVGGDQAFERRPYPPGQHGRARIKESEYLLQLQEKQKARFTYGVMEKQFRLYYKEANNRPGKTGENLLRILESRLDNVVYRAGLARTRRQARQLVTHGHLLVNNKKVDIPSYRVSQYDIIDVKEKSLSTLPFQVARETQGDRPIPGWLQVVGGRLRVLVHQLPERAQIDVPLQEQLIVEYYSK.

An S4 RNA-binding domain is found at 91 to 155 (SRLDNVVYRA…STLPFQVARE (65 aa)).

It belongs to the universal ribosomal protein uS4 family. Part of the 30S ribosomal subunit. Contacts protein S5. The interaction surface between S4 and S5 is involved in control of translational fidelity.

Its function is as follows. One of the primary rRNA binding proteins, it binds directly to 16S rRNA where it nucleates assembly of the body of the 30S subunit. In terms of biological role, with S5 and S12 plays an important role in translational accuracy. The chain is Small ribosomal subunit protein uS4 from Rhodococcus jostii (strain RHA1).